The following is a 102-amino-acid chain: Putative pterin-4-alpha-carbinolamine dehydratase (102 aa).

Belongs to the pterin-4-alpha-carbinolamine dehydratase family.

The catalysed reaction is (4aS,6R)-4a-hydroxy-L-erythro-5,6,7,8-tetrahydrobiopterin = (6R)-L-erythro-6,7-dihydrobiopterin + H2O. The polypeptide is Putative pterin-4-alpha-carbinolamine dehydratase (Burkholderia orbicola (strain MC0-3)).